The sequence spans 326 residues: Phospho-N-acetylmuramoyl-pentapeptide-transferase (326 aa).

The next 10 helical transmembrane spans lie at 4–24 (IWVAFTVSLAVTLIAGPLVIP), 49–69 (TPTMGGIIFLAGTAAGGFLLI), 74–94 (GLIVLLMALGYGFIGFLDDYI), 109–129 (KLLGQVLLAAALAYWAVFEAG), 151–171 (LGWWPFLAFTVLLVVFMSNAV), 179–199 (GLAAGVSMLVALALVPVALAA), 203–223 (GVAAGMAALAGGCLGFLFFNF), 228–248 (VFMGDTGSLALGGGLCAAAVV), 254–274 (LFLIIGGIYVLEALSVIIQVI), and 303–323 (VVITFWALTLVFAAAGLAGLY).

The protein belongs to the glycosyltransferase 4 family. MraY subfamily. Mg(2+) is required as a cofactor.

Its subcellular location is the cell membrane. The enzyme catalyses UDP-N-acetyl-alpha-D-muramoyl-L-alanyl-gamma-D-glutamyl-meso-2,6-diaminopimeloyl-D-alanyl-D-alanine + di-trans,octa-cis-undecaprenyl phosphate = di-trans,octa-cis-undecaprenyl diphospho-N-acetyl-alpha-D-muramoyl-L-alanyl-D-glutamyl-meso-2,6-diaminopimeloyl-D-alanyl-D-alanine + UMP. Its pathway is cell wall biogenesis; peptidoglycan biosynthesis. Functionally, catalyzes the initial step of the lipid cycle reactions in the biosynthesis of the cell wall peptidoglycan: transfers peptidoglycan precursor phospho-MurNAc-pentapeptide from UDP-MurNAc-pentapeptide onto the lipid carrier undecaprenyl phosphate, yielding undecaprenyl-pyrophosphoryl-MurNAc-pentapeptide, known as lipid I. The sequence is that of Phospho-N-acetylmuramoyl-pentapeptide-transferase from Pelotomaculum thermopropionicum (strain DSM 13744 / JCM 10971 / SI).